The following is a 342-amino-acid chain: Endoplasmic reticulum junction formation protein lunapark-1 (342 aa).

The Cytoplasmic segment spans residues 1–39; sequence MGNLFSRNKSPATELERVALSIDDLKKRLQTISSSNTNT. Residues 13–34 are a coiled coil; it reads TELERVALSIDDLKKRLQTISS. The chain crosses the membrane as a helical span at residues 40–60; the sequence is LYYYYMSIVVILSIAMAHTWL. The Lumenal segment spans residues 61-68; the sequence is RFEDPQKT. A helical transmembrane segment spans residues 69-89; that stretch reads YVACALMLGAIGIVLAGRYVI. At 90–342 the chain is on the cytoplasmic side; sequence NGFFSWRTNR…ESKTMETEFH (253 aa). The stretch at 102 to 136 forms a coiled coil; that stretch reads QKLENAISQKTTLLDLVKETLKFKEAKEILDRYEK. The segment at 161–191 is disordered; sequence ADSSMFATPKQEQKRVETPTAQGPNSAMNSM. The segment covering 179-191 has biased composition (polar residues); that stretch reads PTAQGPNSAMNSM. The C4-type; plays a role in ER morphology zinc finger occupies 236 to 261; that stretch reads CSICHTHNGMSTPAEYPYISFRCFEC. Residues 278-342 are disordered; the sequence is RPPMGPKGIQ…ESKTMETEFH (65 aa). Positions 295–321 are enriched in polar residues; that stretch reads SENTHNMMENQKPSTDLTPSASQNGSE. Residues 322-342 are compositionally biased toward basic and acidic residues; it reads KGSDSENEKVPESKTMETEFH.

Belongs to the lunapark family. Expressed in cell bodies along the ventral cord around the pharynx and the tail both in larvae and adults. Also expressed in muscles and hypodermal cells.

The protein localises to the endoplasmic reticulum membrane. In terms of biological role, plays a role in tubular endoplasmic reticulum network formation and maintenance. May be involved in central nervous system development. Has a presynaptic role in neurotransmission. Likely to operate in synaptogenesis by regulating vesicular transport or localization. Required for correct localization of rab-3 and snb-1. The sequence is that of Endoplasmic reticulum junction formation protein lunapark-1 (lnp-1) from Caenorhabditis elegans.